The sequence spans 568 residues: Oxygen-dependent choline dehydrogenase (568 aa).

Residue 8–37 (DYVIIGGGSAGSVLGNRLTEDKDKEVLVLE) coordinates FAD. Catalysis depends on His473, which acts as the Proton acceptor.

This sequence belongs to the GMC oxidoreductase family. It depends on FAD as a cofactor.

It catalyses the reaction choline + A = betaine aldehyde + AH2. The catalysed reaction is betaine aldehyde + NAD(+) + H2O = glycine betaine + NADH + 2 H(+). It participates in amine and polyamine biosynthesis; betaine biosynthesis via choline pathway; betaine aldehyde from choline (cytochrome c reductase route): step 1/1. In terms of biological role, involved in the biosynthesis of the osmoprotectant glycine betaine. Catalyzes the oxidation of choline to betaine aldehyde and betaine aldehyde to glycine betaine at the same rate. The chain is Oxygen-dependent choline dehydrogenase from Staphylococcus haemolyticus (strain JCSC1435).